Here is a 424-residue protein sequence, read N- to C-terminus: Enolase (424 aa).

Gln163 contributes to the (2R)-2-phosphoglycerate binding site. Glu204 serves as the catalytic Proton donor. Mg(2+) contacts are provided by Asp241, Glu284, and Asp311. 4 residues coordinate (2R)-2-phosphoglycerate: Lys336, Arg365, Ser366, and Lys387. Lys336 (proton acceptor) is an active-site residue.

Belongs to the enolase family. Requires Mg(2+) as cofactor.

The protein resides in the cytoplasm. Its subcellular location is the secreted. It localises to the cell surface. The catalysed reaction is (2R)-2-phosphoglycerate = phosphoenolpyruvate + H2O. It participates in carbohydrate degradation; glycolysis; pyruvate from D-glyceraldehyde 3-phosphate: step 4/5. Its function is as follows. Catalyzes the reversible conversion of 2-phosphoglycerate (2-PG) into phosphoenolpyruvate (PEP). It is essential for the degradation of carbohydrates via glycolysis. The polypeptide is Enolase (Dictyoglomus turgidum (strain DSM 6724 / Z-1310)).